Here is a 150-residue protein sequence, read N- to C-terminus: Histone H3-like centromeric protein A (150 aa).

The interval Met1 to Thr55 is disordered. The segment covering Arg41–Pro53 has biased composition (basic residues). The H3-like stretch occupies residues Pro53–Gly150.

It belongs to the histone H3 family. In terms of assembly, component of centromeric nucleosomes, where DNA is wrapped around a histone octamer core. The octamer contains two molecules each of H2A, H2B, CENPA and H4 assembled in one CENPA-H4 heterotetramer and two H2A-H2B heterodimers. CENPA modulates the DNA-binding characteristics of nucleosomes so that protruding DNA ends have higher flexibility than in nucleosomes containing conventional histone H3.

The protein localises to the nucleus. It is found in the chromosome. The protein resides in the centromere. Functionally, histone H3-like nucleosomal protein that is specifically found in centromeric nucleosomes. Replaces conventional H3 in the nucleosome core of centromeric chromatin that serves as an assembly site for the inner kinetochore. The presence of CENPA subtly modifies the nucleosome structure and the way DNA is wrapped around the nucleosome and gives rise to protruding DNA ends that are less well-ordered and rigid compared to nucleosomes containing histone H3. May serve as an epigenetic mark that propagates centromere identity through replication and cell division. Required for recruitment and assembly of kinetochore proteins, and as a consequence required for progress through mitosis, chromosome segregation and cytokinesis. The polypeptide is Histone H3-like centromeric protein A (cenpa) (Xenopus laevis (African clawed frog)).